We begin with the raw amino-acid sequence, 325 residues long: E3 ubiquitin-protein ligase SIAH2 (325 aa).

The segment covering 1–15 (MSRPSSTGPSANKPC) has biased composition (polar residues). The interval 1–43 (MSRPSSTGPSANKPCSKQPPPPQTPHAPSPAAPPAAATISAAG) is disordered. S6 carries the post-translational modification Phosphoserine. Phosphoserine; by DYRK2 is present on S16. A compositionally biased stretch (pro residues) spans 17–33 (KQPPPPQTPHAPSPAAP). T24 carries the post-translational modification Phosphothreonine; by MAPK14. S29 carries the post-translational modification Phosphoserine; by DYRK2 and MAPK14. Positions 34 to 43 (PAAATISAAG) are enriched in low complexity. Position 69 is a phosphoserine; by DYRK2 (S69). The RING-type zinc finger occupies 81 to 116 (CPVCFDYVLPPILQCQAGHLVCNQCRQKLSCCPTCR). Residue T120 is modified to Phosphothreonine; by DYRK2. The segment at 131 to 323 (VASAVLFPCK…LGINVTISTC (193 aa)) is SBD. The SIAH-type zinc-finger motif lies at 134–194 (AVLFPCKYAT…VMSHLMHAHK (61 aa)). C139, C146, H158, C162, C169, C176, H188, and H193 together coordinate Zn(2+).

It belongs to the SINA (Seven in absentia) family. Homodimer. Interacts with UBE2E2. Interacts with VAV1, without mediating its ubiquitin-mediated degradation. Interacts with CACYBP/SIP. Probable component of some large E3 complex possibly composed of UBE2D1, SIAH2, CACYBP/SIP, SKP1, APC and TBL1X. Interacts with UBE2I. Interacts with PEG10, which may inhibit its activity. Interacts with EGLN2 and SNCAIP. Interacts with DYRK2. Interacts with PEG3. Interacts with NR1D1 and NR1D2. Interacts with DCC. Interacts with AXIN1. Post-translationally, phosphorylated at Ser-29 by DYRK2; this increases the ubiquitin ligase activity and promotes degradation of EGLN3. Phosphorylated at Thr-24 and Ser-29 by MAPK14, which mediates the degradation by the proteasome of EGLN3. Widely expressed at low level in embryos and adults. Expressed in a specific population of germ cells within both the mouse ovary and testis. Absent in primordial oocytes but expressed in all growing oocytes, coincident with their recruitment from the pool of quiescent cells. Its level of expression increases as the oocytes mature. Expressed in Graafian follicles and in fertilized zygotes up until the two cell stage, a time of extensive maternal transcript degradation and zygotic gene activation. Expressed in the testis from postmeiotic spermatids.

It is found in the cytoplasm. The protein localises to the nucleus. It carries out the reaction S-ubiquitinyl-[E2 ubiquitin-conjugating enzyme]-L-cysteine + [acceptor protein]-L-lysine = [E2 ubiquitin-conjugating enzyme]-L-cysteine + N(6)-ubiquitinyl-[acceptor protein]-L-lysine.. It functions in the pathway protein modification; protein ubiquitination. Its function is as follows. E3 ubiquitin-protein ligase that mediates ubiquitination and subsequent proteasomal degradation of target proteins. E3 ubiquitin ligases accept ubiquitin from an E2 ubiquitin-conjugating enzyme in the form of a thioester and then directly transfers the ubiquitin to targeted substrates. Mediates E3 ubiquitin ligase activity either through direct binding to substrates or by functioning as the essential RING domain subunit of larger E3 complexes. Mediates ubiquitination and proteasomal degradation of DYRK2 in response to hypoxia. Promotes monoubiquitination of SNCA. Triggers the ubiquitin-mediated degradation of many substrates, including proteins involved in transcription regulation (GPS2, POU2AF1, PML, NCOR1), a cell surface receptor (DCC), an antiapoptotic protein (BAG1), and a protein involved in synaptic vesicle function in neurons (SYP). It is thereby involved in apoptosis, tumor suppression, cell cycle, transcription and signaling processes. Has some overlapping function with SIAH1. Triggers the ubiquitin-mediated degradation of TRAF2, whereas SIAH1 does not. Regulates cellular clock function via ubiquitination of the circadian transcriptional repressors NR1D1 and NR1D2 leading to their proteasomal degradation. Plays an important role in mediating the rhythmic degradation/clearance of NR1D1 and NR1D2 contributing to their circadian profile of protein abundance. Mediates ubiquitination and degradation of EGLN2 and EGLN3 in response to the unfolded protein response (UPR), leading to their degradation and subsequent stabilization of ATF4. Also part of the Wnt signaling pathway in which it mediates the Wnt-induced ubiquitin-mediated proteasomal degradation of AXIN1. The protein is E3 ubiquitin-protein ligase SIAH2 (Siah2) of Mus musculus (Mouse).